Consider the following 154-residue polypeptide: 6,7-dimethyl-8-ribityllumazine synthase (154 aa).

5-amino-6-(D-ribitylamino)uracil contacts are provided by residues F23, 57–59 (AFE), and 81–83 (AVI). (2S)-2-hydroxy-3-oxobutyl phosphate is bound at residue 86–87 (ST). Catalysis depends on H89, which acts as the Proton donor. 5-amino-6-(D-ribitylamino)uracil is bound at residue F114. (2S)-2-hydroxy-3-oxobutyl phosphate is bound at residue R128.

It belongs to the DMRL synthase family.

The enzyme catalyses (2S)-2-hydroxy-3-oxobutyl phosphate + 5-amino-6-(D-ribitylamino)uracil = 6,7-dimethyl-8-(1-D-ribityl)lumazine + phosphate + 2 H2O + H(+). It participates in cofactor biosynthesis; riboflavin biosynthesis; riboflavin from 2-hydroxy-3-oxobutyl phosphate and 5-amino-6-(D-ribitylamino)uracil: step 1/2. Functionally, catalyzes the formation of 6,7-dimethyl-8-ribityllumazine by condensation of 5-amino-6-(D-ribitylamino)uracil with 3,4-dihydroxy-2-butanone 4-phosphate. This is the penultimate step in the biosynthesis of riboflavin. The sequence is that of 6,7-dimethyl-8-ribityllumazine synthase from Campylobacter jejuni subsp. doylei (strain ATCC BAA-1458 / RM4099 / 269.97).